We begin with the raw amino-acid sequence, 208 residues long: MKVVEVKHPLVRHKIGLMREGDISTKRFRELAAEVGSLLTYEATADFETETVTIEGWNGPVDVDQIKGKKVTVVPILRAGLGMMDGVLEHIPSARISVVGIYRDEETLEPVPYFEKLASDMNERIALIVDPMLATGGSMIATIDLLKKRGCTSIKALVLVAAPEGIKALEAAHPDVELYTAAIDRCLNEKGYILPGLGDAGDKIFGTK.

5-phospho-alpha-D-ribose 1-diphosphate-binding positions include R78, R103, and 130 to 138 (DPMLATGGS). Residues I193 and 198 to 200 (GDA) each bind uracil. D199 lines the 5-phospho-alpha-D-ribose 1-diphosphate pocket.

The protein belongs to the UPRTase family. It depends on Mg(2+) as a cofactor.

The enzyme catalyses UMP + diphosphate = 5-phospho-alpha-D-ribose 1-diphosphate + uracil. It functions in the pathway pyrimidine metabolism; UMP biosynthesis via salvage pathway; UMP from uracil: step 1/1. Its activity is regulated as follows. Allosterically activated by GTP. Its function is as follows. Catalyzes the conversion of uracil and 5-phospho-alpha-D-ribose 1-diphosphate (PRPP) to UMP and diphosphate. The chain is Uracil phosphoribosyltransferase from Shewanella oneidensis (strain ATCC 700550 / JCM 31522 / CIP 106686 / LMG 19005 / NCIMB 14063 / MR-1).